The following is a 366-amino-acid chain: MTWILSTGMGPHEDKYAKHERATFKKTYSSMKTLSLNHLTAKQHMLMALCRDISLLPPLTYIFTSLRKAWRVSMRTSITLYEPQSLRDAFTYFWQKLNSAYDNNSSFEGASQKAVNGDGKDSLLLSALTTARASEYLLCSLWCLVSLYLSYAILDSLMVRWIVKYSTVAAILRMFSMSLIIVTLELLLLSSLSPELDYFLHTWILISCVLTAVYIWQSYLTSDLRYIRNQEGEVQEDTNVPEETEDYEDGEDDADEDSHVVVADESTVDVPSNDSLSDNSDGGLFPVNRPSVSHSQSPKRPKKYPKKAFNFTTKRTIDLYKITVLCVVPVGLASFITMLGLLRNLFIQRLDVEQLERILHEMHPPA.

The Lumenal segment spans residues 1–136; sequence MTWILSTGMG…ALTTARASEY (136 aa). N103 and N104 each carry an N-linked (GlcNAc...) asparagine glycan. A helical transmembrane segment spans residues 137 to 157; that stretch reads LLCSLWCLVSLYLSYAILDSL. Topologically, residues 158–167 are cytoplasmic; it reads MVRWIVKYST. Residues 168–188 traverse the membrane as a helical segment; it reads VAAILRMFSMSLIIVTLELLL. The Lumenal segment spans residues 189-195; sequence LSSLSPE. Residues 196 to 216 traverse the membrane as a helical segment; that stretch reads LDYFLHTWILISCVLTAVYIW. At 217-321 the chain is on the cytoplasmic side; sequence QSYLTSDLRY…TTKRTIDLYK (105 aa). Acidic residues predominate over residues 233–256; sequence EVQEDTNVPEETEDYEDGEDDADE. The disordered stretch occupies residues 233-305; sequence EVQEDTNVPE…QSPKRPKKYP (73 aa). The span at 272-284 shows a compositional bias: low complexity; it reads SNDSLSDNSDGGL. Residues 322–342 traverse the membrane as a helical segment; the sequence is ITVLCVVPVGLASFITMLGLL. Topologically, residues 343–366 are lumenal; sequence RNLFIQRLDVEQLERILHEMHPPA.

It belongs to the EOS1 family. In terms of processing, N-glycosylated.

The protein localises to the endoplasmic reticulum membrane. Functionally, involved in oxidative stress resistance and N-glycosylation. In Saccharomyces cerevisiae (strain ATCC 204508 / S288c) (Baker's yeast), this protein is N-glycosylation protein EOS1 (EOS1).